A 384-amino-acid chain; its full sequence is BarH-like 2 homeobox protein (384 aa).

3 disordered regions span residues 1 to 134, 154 to 235, and 364 to 384; these read MTAM…APRT, CAPY…ARTA, and PGGQ…PHPR. Composition is skewed to low complexity over residues 101–110 and 119–134; these read VPAQSLQPSP and QSAA…APRT. The segment covering 157 to 175 has biased composition (polar residues); it reads YSTSVSSPHHTPKQESNAA. Over residues 177 to 217 the composition is skewed to basic and acidic residues; the sequence is ESFRPKLEQEDGKTKLDKREDPQSDIKCHGTKEEGDREITS. A DNA-binding region (homeobox) is located at residues 229–288; that stretch reads PRKARTAFSDHQLNQLERSFERQKYLSVQDRMDLAAALNLTDTQVKTWYQNRRTKWKRQT.

This sequence belongs to the BAR homeobox family.

Its subcellular location is the nucleus. In terms of biological role, potential regulator of neural basic helix-loop-helix genes. It may down-regulate expression of ASCL1 and, within the thalamus, up-regulate NGN2, thereby regulating distinct patterns of neuronal differentiation. In Mus musculus (Mouse), this protein is BarH-like 2 homeobox protein (Barhl2).